The sequence spans 405 residues: uncharacterized protein (405 aa).

A run of 13 helical transmembrane segments spans residues 19-39, 48-68, 85-105, 106-126, 129-149, 156-176, 178-198, 224-244, 252-272, 283-303, 309-329, 344-364, and 366-386; these read IVSI…PLAV, MGFS…ATLL, IVVF…LADI, ASAW…ILGI, SFAG…LHIG, GIVT…CYAW, GLQG…LLAL, GMAL…ITLF, GAAF…LLFP, VAMI…TAAM, IGVL…GVVA, TYTV…GLVM, and WAGV…ALLL.

The protein belongs to the major facilitator superfamily. YhhS family.

It is found in the cell inner membrane. This is an uncharacterized protein from Salmonella paratyphi C (strain RKS4594).